Reading from the N-terminus, the 397-residue chain is DNA-directed RNA polymerase subunit Rpo1C (397 aa).

It belongs to the RNA polymerase beta' chain family. As to quaternary structure, part of the RNA polymerase complex.

The protein resides in the cytoplasm. The enzyme catalyses RNA(n) + a ribonucleoside 5'-triphosphate = RNA(n+1) + diphosphate. Functionally, DNA-dependent RNA polymerase (RNAP) catalyzes the transcription of DNA into RNA using the four ribonucleoside triphosphates as substrates. Forms part of the jaw domain. The protein is DNA-directed RNA polymerase subunit Rpo1C of Pyrococcus abyssi (strain GE5 / Orsay).